The primary structure comprises 312 residues: Ribonuclease Z (312 aa).

Histidine 63, histidine 65, aspartate 67, histidine 68, histidine 141, aspartate 212, and histidine 270 together coordinate Zn(2+). Aspartate 67 (proton acceptor) is an active-site residue.

Belongs to the RNase Z family. In terms of assembly, homodimer. Zn(2+) is required as a cofactor.

It catalyses the reaction Endonucleolytic cleavage of RNA, removing extra 3' nucleotides from tRNA precursor, generating 3' termini of tRNAs. A 3'-hydroxy group is left at the tRNA terminus and a 5'-phosphoryl group is left at the trailer molecule.. Zinc phosphodiesterase, which displays some tRNA 3'-processing endonuclease activity. Probably involved in tRNA maturation, by removing a 3'-trailer from precursor tRNA. The chain is Ribonuclease Z from Lactobacillus helveticus (strain DPC 4571).